The sequence spans 486 residues: NADH-quinone oxidoreductase subunit N (486 aa).

Transmembrane regions (helical) follow at residues 8–28, 36–56, 74–94, 104–124, 125–145, 160–180, 201–221, 239–259, 269–289, 298–318, 329–349, 376–396, 410–432, and 459–479; these read LTAL…ILSI, FVAV…YFLI, ILYI…SYPW, EFYL…ISHH, MASF…LIAY, IILS…VYSI, ILVV…KLSI, VLSF…LNFL, VIYF…NLMA, FLGY…LVSH, AIYL…VNLI, SVLT…GFIG, WLIG…RIIL, and IVIC…NPLI.

It belongs to the complex I subunit 2 family. As to quaternary structure, NDH-1 is composed of 13 different subunits. Subunits NuoA, H, J, K, L, M, N constitute the membrane sector of the complex.

It is found in the cell membrane. It catalyses the reaction a quinone + NADH + 5 H(+)(in) = a quinol + NAD(+) + 4 H(+)(out). Functionally, NDH-1 shuttles electrons from NADH, via FMN and iron-sulfur (Fe-S) centers, to quinones in the respiratory chain. The immediate electron acceptor for the enzyme in this species is believed to be ubiquinone. Couples the redox reaction to proton translocation (for every two electrons transferred, four hydrogen ions are translocated across the cytoplasmic membrane), and thus conserves the redox energy in a proton gradient. The chain is NADH-quinone oxidoreductase subunit N from Buchnera aphidicola subsp. Acyrthosiphon pisum (strain APS) (Acyrthosiphon pisum symbiotic bacterium).